A 321-amino-acid polypeptide reads, in one-letter code: Corticotropin-releasing factor-binding protein (321 aa).

Residues 1–21 (MTPASRPDWCLILLFLAVLRG) form the signal peptide. Disulfide bonds link C59/C80, C103/C140, C182/C204, C237/C264, and C277/C317. The N-linked (GlcNAc...) asparagine glycan is linked to N203.

This sequence belongs to the CRF-binding protein family.

Its subcellular location is the secreted. Binds CRF and inactivates it. May prevent inappropriate pituitary-adrenal stimulation in pregnancy. This Xenopus laevis (African clawed frog) protein is Corticotropin-releasing factor-binding protein (crhbp).